The following is a 102-amino-acid chain: FMRFamide-like neuropeptides 9 (102 aa).

An N-terminal signal peptide occupies residues 1 to 19 (MNQFYALFLVACIAAMANA). A propeptide spanning residues 20–63 (YEEPDLDALAEFCGKESNRKYCDQIAQLATQHAIGINQEQVRME) is cleaved from the precursor. Residue Phe72 is modified to Phenylalanine amide. The propeptide occupies 75 to 90 (RSGYPLVIDDEEMRMD). Phe99 carries the post-translational modification Phenylalanine amide.

The protein belongs to the FARP (FMRFamide related peptide) family. In terms of tissue distribution, each flp gene is expressed in a distinct set of neurons.

The protein resides in the secreted. In terms of biological role, FMRFamides and FMRFamide-like peptides are neuropeptides. KPSFVRF-amide: Has no effect on somatic body wall muscle, inhibits contraction of vaginal vera muscle, and inhibits the activity of the dissected pharyngeal myogenic muscle system. Acts as a ligand for the npr-22 receptor in vitro. This chain is FMRFamide-like neuropeptides 9, found in Caenorhabditis elegans.